A 327-amino-acid polypeptide reads, in one-letter code: Pantothenate kinase (327 aa).

105–112 (GSVAVGKS) contributes to the ATP binding site.

It belongs to the prokaryotic pantothenate kinase family.

It localises to the cytoplasm. It carries out the reaction (R)-pantothenate + ATP = (R)-4'-phosphopantothenate + ADP + H(+). Its pathway is cofactor biosynthesis; coenzyme A biosynthesis; CoA from (R)-pantothenate: step 1/5. This is Pantothenate kinase from Cutibacterium acnes (strain DSM 16379 / KPA171202) (Propionibacterium acnes).